Consider the following 198-residue polypeptide: Probable GTP-binding protein EngB (198 aa).

The region spanning 22–195 (DLPEIALAGR…WKAIHKFTKT (174 aa)) is the EngB-type G domain. Residues 30 to 37 (GRSNVGKS), 57 to 61 (GKTQT), 75 to 78 (DVPG), 142 to 145 (TKAD), and 174 to 176 (FSS) contribute to the GTP site. Ser37 and Thr59 together coordinate Mg(2+).

It belongs to the TRAFAC class TrmE-Era-EngA-EngB-Septin-like GTPase superfamily. EngB GTPase family. Requires Mg(2+) as cofactor.

In terms of biological role, necessary for normal cell division and for the maintenance of normal septation. The protein is Probable GTP-binding protein EngB of Bacillus cereus (strain B4264).